The chain runs to 263 residues: Fructose-bisphosphate aldolase class 1 (263 aa).

Substrate contacts are provided by residues 24–25, H29, D33, and W144; that span reads DH. Residue Y146 is the Proton donor of the active site. Residues R148, 177 to 179, 202 to 204, and 231 to 232 each bind substrate; these read KIK, SGG, and GR. K177 serves as the catalytic Schiff-base intermediate with dihydroxyacetone-P.

This sequence belongs to the DeoC/FbaB aldolase family. In terms of assembly, homodecamer (dimer of pentamers).

The protein resides in the cytoplasm. It catalyses the reaction beta-D-fructose 1,6-bisphosphate = D-glyceraldehyde 3-phosphate + dihydroxyacetone phosphate. Activated by citrate. Functionally, catalyzes the reversible cleavage of fructose 1,6-bisphosphate (FBP) to glyceraldehyde 3-phosphate (GAP) and dihydroxyacetone phosphate (DHAP). This is Fructose-bisphosphate aldolase class 1 (fba) from Thermoproteus tenax (strain ATCC 35583 / DSM 2078 / JCM 9277 / NBRC 100435 / Kra 1).